A 484-amino-acid chain; its full sequence is Malonate-semialdehyde dehydrogenase 3 (484 aa).

NAD(+) is bound by residues Phe152, Lys176, Glu179, Arg180, and Ser229. The active-site Nucleophile is Cys284. Glu384 serves as a coordination point for NAD(+).

Belongs to the aldehyde dehydrogenase family. IolA subfamily. In terms of assembly, homotetramer.

The enzyme catalyses 3-oxopropanoate + NAD(+) + CoA + H2O = hydrogencarbonate + acetyl-CoA + NADH + H(+). The catalysed reaction is 2-methyl-3-oxopropanoate + NAD(+) + CoA + H2O = propanoyl-CoA + hydrogencarbonate + NADH + H(+). It functions in the pathway polyol metabolism; myo-inositol degradation into acetyl-CoA; acetyl-CoA from myo-inositol: step 7/7. Its function is as follows. Catalyzes the oxidation of malonate semialdehyde (MSA) and methylmalonate semialdehyde (MMSA) into acetyl-CoA and propanoyl-CoA, respectively. Is involved in a myo-inositol catabolic pathway. Bicarbonate, and not CO2, is the end-product of the enzymatic reaction. The protein is Malonate-semialdehyde dehydrogenase 3 of Geobacillus kaustophilus (strain HTA426).